Here is a 251-residue protein sequence, read N- to C-terminus: Tail tip protein L (251 aa).

C184, C198, C221, and C228 together coordinate [4Fe-4S] cluster.

The protein belongs to the lambda-like tail tip protein L family. The cofactor is [4Fe-4S] cluster.

The protein resides in the virion. The protein localises to the host cytoplasm. Part of the distal tail tip complex which plays a role in DNA injection during entry, and in tail assembly initiation during exit. The tail tip complex is assembled successively with three tail central fiber proteins J, one tail tip protein I, one tail tip protein L and one tail tip protein K. The tail tip complex interacts with tail measure protein to initiate tail tube assembly. The formation of the tail tip complex is completed by the addition of tail tip protein M, which is followed by tail tube polymerization. The protein is Tail tip protein L of Escherichia phage N15 (Bacteriophage N15).